The sequence spans 396 residues: Elongation factor Tu (396 aa).

Residues 10–206 (KPHVNVGTIG…ALDSYIPEPV (197 aa)) enclose the tr-type G domain. A G1 region spans residues 19 to 26 (GHIDHGKT). 19 to 26 (GHIDHGKT) is a binding site for GTP. Residue threonine 26 coordinates Mg(2+). The G2 stretch occupies residues 60–64 (TKTVT). Positions 83-86 (DCPG) are G3. Residues 83–87 (DCPGH) and 138–141 (NKCD) each bind GTP. A G4 region spans residues 138–141 (NKCD). The interval 176-178 (ASL) is G5.

The protein belongs to the TRAFAC class translation factor GTPase superfamily. Classic translation factor GTPase family. EF-Tu/EF-1A subfamily. In terms of assembly, monomer.

It localises to the cytoplasm. The enzyme catalyses GTP + H2O = GDP + phosphate + H(+). In terms of biological role, GTP hydrolase that promotes the GTP-dependent binding of aminoacyl-tRNA to the A-site of ribosomes during protein biosynthesis. The protein is Elongation factor Tu of Sorangium cellulosum (strain So ce56) (Polyangium cellulosum (strain So ce56)).